The following is a 42-amino-acid chain: Photosystem II reaction center protein J (42 aa).

The chain crosses the membrane as a helical span at residues 10–30 (IPLWLVGTVAGTAAIGLLGIF).

This sequence belongs to the PsbJ family. PSII is composed of 1 copy each of membrane proteins PsbA, PsbB, PsbC, PsbD, PsbE, PsbF, PsbH, PsbI, PsbJ, PsbK, PsbL, PsbM, PsbT, PsbX, PsbY, PsbZ, Psb30/Ycf12, at least 3 peripheral proteins of the oxygen-evolving complex and a large number of cofactors. It forms dimeric complexes.

It is found in the plastid. It localises to the chloroplast thylakoid membrane. One of the components of the core complex of photosystem II (PSII). PSII is a light-driven water:plastoquinone oxidoreductase that uses light energy to abstract electrons from H(2)O, generating O(2) and a proton gradient subsequently used for ATP formation. It consists of a core antenna complex that captures photons, and an electron transfer chain that converts photonic excitation into a charge separation. This is Photosystem II reaction center protein J from Pleurastrum terricola (Filamentous green alga).